The sequence spans 92 residues: RQC P-site tRNA stabilizing factor (92 aa).

Positions M5–E65 constitute an S4 RNA-binding domain.

It belongs to the RqcP family. As to quaternary structure, associates with stalled 50S ribosomal subunits. Binds to RqcH, 23S rRNA and the P-site tRNA. Does not require RqcH for association with 50S subunits.

Its function is as follows. Key component of the ribosome quality control system (RQC), a ribosome-associated complex that mediates the extraction of incompletely synthesized nascent chains from stalled ribosomes and their subsequent degradation. RqcH recruits Ala-charged tRNA, and with RqcP directs the elongation of stalled nascent chains on 50S ribosomal subunits, leading to non-templated C-terminal alanine extensions (Ala tail). The Ala tail promotes nascent chain degradation. RqcP is associated with the translocation-like movement of the peptidyl-tRNA from the A-site into the P-site. In Listeria innocua serovar 6a (strain ATCC BAA-680 / CLIP 11262), this protein is RQC P-site tRNA stabilizing factor.